We begin with the raw amino-acid sequence, 288 residues long: Transformer-2 protein homolog beta (288 aa).

Disordered stretches follow at residues M1–P114 and T196–G225. S2 is modified (N-acetylserine). Phosphoserine occurs at positions 2, 4, and 14. Residues A17–K28 are compositionally biased toward low complexity. S29 carries the post-translational modification Phosphoserine. At T33 the chain carries Phosphothreonine. The segment covering R59–G109 has biased composition (basic residues). Residues S83, S85, S87, S95, S97, and S99 each carry the phosphoserine modification. Position 103 is a phosphothreonine (T103). Residues C118–T196 form the RRM domain. Positions F193–Y230 are linker. K197 is covalently cross-linked (Glycyl lysine isopeptide (Lys-Gly) (interchain with G-Cter in SUMO2)). T201 and T203 each carry phosphothreonine. 2 positions are modified to phosphoserine: S215 and S237. R241 bears the Asymmetric dimethylarginine; alternate mark. The residue at position 241 (R241) is a Dimethylated arginine; alternate. The residue at position 241 (R241) is an Omega-N-methylarginine; alternate. Residues G242–Y288 are disordered. The span at Y274–Y288 shows a compositional bias: basic residues.

It belongs to the splicing factor SR family. In terms of assembly, found in a pre-mRNA exonic splicing enhancer (ESE) complex with TRA2B/SFRS10, SNRNP70, SNRPA1 and SRRM1. Binds to A3 enhancer proteins SFRS4, SFRS5, SFRS6 and SFRS9. Interacts with CPSF6, RBMY1A1, RBMX, RNPS1 and phosphorylated SFRS13A. Interacts with SAFB/SAFB1. Interacts with ILDR1 (via C-terminus) and ILDR2. Phosphorylated in the RS domains.

It is found in the nucleus. Sequence-specific RNA-binding protein which participates in the control of pre-mRNA splicing. Can either activate or suppress exon inclusion. Acts additively with RBMX to promote exon 7 inclusion of the survival motor neuron SMN2. Activates the splicing of MAPT/Tau exon 10. Alters pre-mRNA splicing patterns by antagonizing the effects of splicing regulators, like RBMX. Binds to the AG-rich SE2 domain in the SMN exon 7 RNA. Binds to pre-mRNA. This chain is Transformer-2 protein homolog beta (TRA2B), found in Bos taurus (Bovine).